A 122-amino-acid chain; its full sequence is Large ribosomal subunit protein uL14 (122 aa).

The protein belongs to the universal ribosomal protein uL14 family. In terms of assembly, part of the 50S ribosomal subunit. Forms a cluster with proteins L3 and L19. In the 70S ribosome, L14 and L19 interact and together make contacts with the 16S rRNA in bridges B5 and B8.

In terms of biological role, binds to 23S rRNA. Forms part of two intersubunit bridges in the 70S ribosome. This Halalkalibacterium halodurans (strain ATCC BAA-125 / DSM 18197 / FERM 7344 / JCM 9153 / C-125) (Bacillus halodurans) protein is Large ribosomal subunit protein uL14.